A 682-amino-acid polypeptide reads, in one-letter code: Probable glycosyl transferase Gly (682 aa).

Residues 21-26 (CASFSD) and 112-113 (DC) each bind UDP. 3 residues coordinate Mn(2+): D112, D114, and H230. 230-236 (HYLPERK) is a UDP binding site.

It belongs to the glycosyltransferase 8 family. Part of the accessory SecA2/SecY2 protein translocation apparatus required to export cell wall protein GspB.

Functionally, part of the accessory SecA2/SecY2 system specifically required to export GspB, a serine-rich repeat cell wall protein encoded upstream in the same operon. The polypeptide is Probable glycosyl transferase Gly (gly) (Streptococcus gordonii).